The chain runs to 201 residues: Interferon-induced transmembrane protein 10 (201 aa).

Disordered regions lie at residues 1–23 (MAQG…DGTQ) and 60–88 (AAPA…KTDS). At 1 to 127 (MAQGPSQCPA…PDTTEVNDYY (127 aa)) the chain is on the extracellular side. Positions 63–73 (APEPSASPPMA) are enriched in pro residues. A helical membrane pass occupies residues 128–148 (LWSIFNFVYLNFCCLGFIALA). S-palmitoyl cysteine attachment occurs at residues Cys140 and Cys141. At 149-173 (YSLKVRDKKLLNDLNGAVEDAKTAR) the chain is on the cytoplasmic side. The chain crosses the membrane as a helical span at residues 174–194 (LFNITSSALAASCIILIFIFL). At 195 to 201 (RYPLTDY) the chain is on the extracellular side.

It belongs to the CD225/Dispanin family.

It localises to the cell membrane. This Mus musculus (Mouse) protein is Interferon-induced transmembrane protein 10 (Ifitm10).